The following is a 126-amino-acid chain: Large ribosomal subunit protein bL17 (126 aa).

The protein belongs to the bacterial ribosomal protein bL17 family. As to quaternary structure, part of the 50S ribosomal subunit. Contacts protein L32.

The chain is Large ribosomal subunit protein bL17 from Rickettsia felis (strain ATCC VR-1525 / URRWXCal2) (Rickettsia azadi).